Here is a 68-residue protein sequence, read N- to C-terminus: Large ribosomal subunit protein uL30 (68 aa).

This sequence belongs to the universal ribosomal protein uL30 family. Part of the 50S ribosomal subunit.

The chain is Large ribosomal subunit protein uL30 from Bartonella henselae (strain ATCC 49882 / DSM 28221 / CCUG 30454 / Houston 1) (Rochalimaea henselae).